The following is a 183-amino-acid chain: Ribosome maturation factor RimM (183 aa).

Residues E103–F183 form the PRC barrel domain.

Belongs to the RimM family. In terms of assembly, binds ribosomal protein uS19.

It is found in the cytoplasm. An accessory protein needed during the final step in the assembly of 30S ribosomal subunit, possibly for assembly of the head region. Essential for efficient processing of 16S rRNA. May be needed both before and after RbfA during the maturation of 16S rRNA. It has affinity for free ribosomal 30S subunits but not for 70S ribosomes. The chain is Ribosome maturation factor RimM from Escherichia coli O157:H7 (strain EC4115 / EHEC).